The chain runs to 805 residues: Leucine--tRNA ligase (805 aa).

A 'HIGH' region motif is present at residues 40-51 (PYPSGSGLHVGH). The 'KMSKS' region motif lies at 576–580 (KMSKS). Lysine 579 serves as a coordination point for ATP.

The protein belongs to the class-I aminoacyl-tRNA synthetase family.

The protein resides in the cytoplasm. The catalysed reaction is tRNA(Leu) + L-leucine + ATP = L-leucyl-tRNA(Leu) + AMP + diphosphate. The protein is Leucine--tRNA ligase of Chloroherpeton thalassium (strain ATCC 35110 / GB-78).